The following is a 215-amino-acid chain: 3-demethoxyubiquinol 3-hydroxylase (215 aa).

Positions 64, 94, 97, 146, 178, and 181 each coordinate Fe cation.

The protein belongs to the COQ7 family. Fe cation is required as a cofactor.

It is found in the cell membrane. The catalysed reaction is a 5-methoxy-2-methyl-3-(all-trans-polyprenyl)benzene-1,4-diol + AH2 + O2 = a 3-demethylubiquinol + A + H2O. The protein operates within cofactor biosynthesis; ubiquinone biosynthesis. In terms of biological role, catalyzes the hydroxylation of 2-nonaprenyl-3-methyl-6-methoxy-1,4-benzoquinol during ubiquinone biosynthesis. The polypeptide is 3-demethoxyubiquinol 3-hydroxylase (Pseudomonas savastanoi pv. phaseolicola (strain 1448A / Race 6) (Pseudomonas syringae pv. phaseolicola (strain 1448A / Race 6))).